We begin with the raw amino-acid sequence, 708 residues long: ATP-dependent RNA helicase laf-1 (708 aa).

Residues 1–21 (MESNQSNNGGSGNAALNRGGR) show a composition bias toward low complexity. A disordered region spans residues 1–191 (MESNQSNNGG…RGTSKWENRG (191 aa)). Residues 48–70 (GAGGGGYRRGGGNSGGGGGGGYD) show a composition bias toward gly residues. Composition is skewed to basic and acidic residues over residues 72–83 (GYNDNRDDRDNR) and 90–99 (GRDRNYEDRG). Gly residues predominate over residues 100 to 123 (YNGGGGGGGNRGYNNNRGGGGGGY). The short motif at 231 to 259 (SLFSDLSLHEWIEENIKTAGYDRPTPVQK) is the Q motif element. The 192-residue stretch at 262-453 (IPALQGGRDL…QDFLKENYVF (192 aa)) folds into the Helicase ATP-binding domain. Residue 275–282 (AQTGSGKT) participates in ATP binding. Residues 397 to 400 (DEAD) carry the DEAD box motif. One can recognise a Helicase C-terminal domain in the interval 465 to 626 (NIMQKIVWVE…ELPDWLEGMS (162 aa)). The tract at residues 623 to 708 (EGMSGDMRSG…RAQPQQDWWS (86 aa)) is disordered. Gly residues-rich tracts occupy residues 630-647 (RSGG…GQRF) and 656-692 (GGSG…GGGR). Polar residues predominate over residues 699-708 (RAQPQQDWWS).

The protein belongs to the DEAD box helicase family. DDX3/DED1 subfamily. As to quaternary structure, binds RNA as a monomer at low laf-1 concentrations and as a dimer at high laf-1 concentrations. In terms of tissue distribution, expressed in the germline and soma of young adult hermaphrodites.

It is found in the cytoplasm. The protein localises to the cytoplasmic granule. It localises to the nucleus. The protein resides in the stress granule. Its subcellular location is the inflammasome. It is found in the cell membrane. The protein localises to the cell projection. It localises to the lamellipodium. The catalysed reaction is ATP + H2O = ADP + phosphate + H(+). In terms of biological role, multifunctional ATP-dependent RNA helicase. Plays a role in RNA remodeling, but is not required for RNA unwinding. Binds to RNA in a concentration-dependent manner to stimulate annealing between two complementary strands of RNA. This process is also dependent upon ATP; ATP reduces binding to RNA and subsequently diminishes RNA annealing. Involved in many cellular processes, which do not necessarily require its ATPase/helicase catalytic activities. Involved in the regulation of transcription and translation initiation. Involved in innate immunity. Involved in both stress and inflammatory responses. Promotes liquid-liquid phase separation of P granules, which is a process important for intracellular organization and stress granule assembly. Required for embryonic development. Plays a role in sexual cell fate determination by negatively regulating the translation of the sex determining protein tra-2. May play a protective role in the response to heat and oxidative stress. May negatively regulate extrinsic apoptotic signaling pathway via death domain receptors. May be involved in mitotic chromosome segregation. The chain is ATP-dependent RNA helicase laf-1 from Caenorhabditis elegans.